The primary structure comprises 558 residues: Glypican-1 (558 aa).

Residues 1 to 23 form the signal peptide; the sequence is MELRARGWWLLCAAAALVACARG. Disulfide bonds link Cys32-Cys68, Cys62-Cys256, Cys69-Cys259, Cys191-Cys343, Cys246-Cys279, Cys268-Cys415, and Cys272-Cys401. 2 N-linked (GlcNAc...) asparagine glycosylation sites follow: Asn79 and Asn116. Positions 341-374 are disordered; it reads QGCGNPKVNPQGPGPEEKRRRGKLAPRERPPSGT. Basic and acidic residues predominate over residues 355–370; sequence PEEKRRRGKLAPRERP. Residues Ser486, Ser488, and Ser490 are each glycosylated (O-linked (Xyl...) (heparan sulfate) serine). Residues 505–534 are disordered; that stretch reads RKSSSSRTPLTHALPGLSEQEGQKTSAASC. Ser530 carries the GPI-anchor amidated serine lipid modification. A propeptide spans 531-558 (removed in mature form); it reads AASCPQPPTFLLPLLLFLALTVARPRWR.

This sequence belongs to the glypican family. S-nitrosylated in a Cu(2+)-dependent manner. Nitric acid (NO) is released from the nitrosylated cysteines by ascorbate or by some other reducing agent, in a Cu(2+) or Zn(2+) dependent manner. This free nitric oxide is then capable of cleaving the heparan sulfate side chains. In terms of processing, N- and O-glycosylated. N-glycosylation is mainly of the complex type containing sialic acid. O-glycosylated with heparan sulfate. The heparan sulfate chains can be cleaved either by the action of heparanase or, degraded by a deaminative process that uses nitric oxide (NO) released from the S-nitrosylated cysteines. This process is triggered by ascorbate, or by some other reducing agent, in a Cu(2+)- or Zn(2+) dependent manner. Cu(2+) ions are provided by ceruloproteins such as APP, PRNP or CP which associate with GCP1 in intracellular compartments or lipid rafts. Post-translationally, this cell-associated glypican is further processed to give rise to a medium-released species.

The protein resides in the cell membrane. It localises to the endosome. It is found in the secreted. The protein localises to the extracellular space. Cell surface proteoglycan that bears heparan sulfate. Binds, via the heparan sulfate side chains, alpha-4 (V) collagen and participates in Schwann cell myelination. May act as a catalyst in increasing the rate of conversion of prion protein PRPN(C) to PRNP(Sc) via associating (via the heparan sulfate side chains) with both forms of PRPN, targeting them to lipid rafts and facilitating their interaction. Required for proper skeletal muscle differentiation by sequestering FGF2 in lipid rafts preventing its binding to receptors (FGFRs) and inhibiting the FGF-mediated signaling. This is Glypican-1 (GPC1) from Homo sapiens (Human).